The sequence spans 227 residues: Guanylate kinase (227 aa).

The region spanning 21–199 (GNLFMVVAPS…ALAELECIVA (179 aa)) is the Guanylate kinase-like domain. Residue 28 to 35 (APSGAGKS) coordinates ATP.

Belongs to the guanylate kinase family.

Its subcellular location is the cytoplasm. The enzyme catalyses GMP + ATP = GDP + ADP. Essential for recycling GMP and indirectly, cGMP. The protein is Guanylate kinase of Burkholderia lata (strain ATCC 17760 / DSM 23089 / LMG 22485 / NCIMB 9086 / R18194 / 383).